Here is a 277-residue protein sequence, read N- to C-terminus: 3-methyl-2-oxobutanoate hydroxymethyltransferase (277 aa).

Residues Asp-53 and Asp-96 each contribute to the Mg(2+) site. Residues 53-54, Asp-96, and Lys-126 contribute to the 3-methyl-2-oxobutanoate site; that span reads DS. Glu-128 serves as a coordination point for Mg(2+). Glu-195 functions as the Proton acceptor in the catalytic mechanism.

Belongs to the PanB family. As to quaternary structure, homodecamer; pentamer of dimers. Mg(2+) serves as cofactor.

The protein localises to the cytoplasm. It catalyses the reaction 3-methyl-2-oxobutanoate + (6R)-5,10-methylene-5,6,7,8-tetrahydrofolate + H2O = 2-dehydropantoate + (6S)-5,6,7,8-tetrahydrofolate. The protein operates within cofactor biosynthesis; (R)-pantothenate biosynthesis; (R)-pantoate from 3-methyl-2-oxobutanoate: step 1/2. Catalyzes the reversible reaction in which hydroxymethyl group from 5,10-methylenetetrahydrofolate is transferred onto alpha-ketoisovalerate to form ketopantoate. The sequence is that of 3-methyl-2-oxobutanoate hydroxymethyltransferase from Chlorobaculum parvum (strain DSM 263 / NCIMB 8327) (Chlorobium vibrioforme subsp. thiosulfatophilum).